Here is a 564-residue protein sequence, read N- to C-terminus: 3beta-hydroxysteroid-dehydrogenase/decarboxylase isoform 2 (564 aa).

An NAD(+)-binding site is contributed by 16 to 21; that stretch reads GGRGFA. N-linked (GlcNAc...) asparagine glycosylation is found at Asn146 and Asn158. NAD(+)-binding residues include Tyr161 and Lys165. Residue Lys165 is the Proton donor of the active site. The Reticulon domain occupies 384 to 564; it reads VADTLLWKDL…EKLFGSKKHD (181 aa). Transmembrane regions (helical) follow at residues 398-418 and 424-444; these read IAIF…STVV and ALLV…KIFG. N-linked (GlcNAc...) asparagine glycosylation occurs at Asn474. Helical transmembrane passes span 486-506 and 507-527; these read GNDW…SLAG and AISL…AFLV.

Belongs to the 3-beta-HSD family.

It is found in the endoplasmic reticulum membrane. The catalysed reaction is a 3beta-hydroxysteroid-4alpha-carboxylate + NAD(+) = a 3-oxosteroid + CO2 + NADH. The enzyme catalyses 4alpha-carboxy-4beta,14alpha-dimethyl-9beta,19-cyclo-5alpha-ergost-24(24(1))-en-3beta-ol + NAD(+) = cycloeucalenone + CO2 + NADH. The protein operates within steroid biosynthesis; zymosterol biosynthesis; zymosterol from lanosterol: step 4/6. Its function is as follows. 3beta-hydroxysteroid-dehydrogenase/decarboxylase involved in sterol synthesis. Catalyzes the formation of 3-oxosteroids from 3beta-hydroxysteroids-4alpha-carboxylate. Involved in the regulation of inflorescence internodes and leaves growth, probably by affecting auxin transporter activity possibly by altering sterol composition in the membranes. In Arabidopsis thaliana (Mouse-ear cress), this protein is 3beta-hydroxysteroid-dehydrogenase/decarboxylase isoform 2.